A 113-amino-acid polypeptide reads, in one-letter code: Hydrogenase maturation factor HypA (113 aa).

His-2 contributes to the Ni(2+) binding site. Residues Cys-73, Cys-76, Cys-89, and Cys-92 each contribute to the Zn(2+) site.

The protein belongs to the HypA/HybF family.

Involved in the maturation of [NiFe] hydrogenases. Required for nickel insertion into the metal center of the hydrogenase. This chain is Hydrogenase maturation factor HypA, found in Cereibacter sphaeroides (Rhodobacter sphaeroides).